The primary structure comprises 125 residues: Histone H2A, orphon (125 aa).

Over residues 1–18 (MSGRGKGGKVKAKAKSRS) the composition is skewed to basic residues. The segment at 1–21 (MSGRGKGGKVKAKAKSRSSRA) is disordered. N-acetylserine is present on Ser-2. Ser-2 is modified (phosphoserine). Residue Lys-119 forms a Glycyl lysine isopeptide (Lys-Gly) (interchain with G-Cter in ubiquitin) linkage.

It belongs to the histone H2A family. The nucleosome is a histone octamer containing two molecules each of H2A, H2B, H3 and H4 assembled in one H3-H4 heterotetramer and two H2A-H2B heterodimers. The octamer wraps approximately 147 bp of DNA. Post-translationally, monoubiquitination of Lys-119 gives a specific tag for epigenetic transcriptional repression. Phosphorylation on Ser-2 is enhanced during mitosis. Phosphorylation on Ser-2 directly represses transcription.

Its subcellular location is the nucleus. The protein localises to the chromosome. In terms of biological role, core component of nucleosome. Nucleosomes wrap and compact DNA into chromatin, limiting DNA accessibility to the cellular machineries which require DNA as a template. Histones thereby play a central role in transcription regulation, DNA repair, DNA replication and chromosomal stability. DNA accessibility is regulated via a complex set of post-translational modifications of histones, also called histone code, and nucleosome remodeling. The chain is Histone H2A, orphon from Chironomus thummi thummi (Midge).